Here is a 283-residue protein sequence, read N- to C-terminus: GDP-polyphosphate phosphotransferase (283 aa).

The protein belongs to the polyphosphate kinase 2 (PPK2) family. Class I subfamily.

It catalyses the reaction [phosphate](n) + GTP = [phosphate](n+1) + GDP. In terms of biological role, uses inorganic polyphosphate (polyP) as a donor to convert GDP to GTP. The polypeptide is GDP-polyphosphate phosphotransferase (Mycolicibacterium smegmatis (strain ATCC 700084 / mc(2)155) (Mycobacterium smegmatis)).